The sequence spans 360 residues: Probable cinnamyl alcohol dehydrogenase 1 (360 aa).

C47 is a Zn(2+) binding site. T49 contacts NADP(+). The Zn(2+) site is built by H69, E70, C100, C103, C106, C114, and C163. NADP(+)-binding positions include T167, G189–G194, S212–K217, T252, G276, and S299–I301.

This sequence belongs to the zinc-containing alcohol dehydrogenase family. As to quaternary structure, homodimer. Zn(2+) is required as a cofactor.

The enzyme catalyses (E)-cinnamyl alcohol + NADP(+) = (E)-cinnamaldehyde + NADPH + H(+). The catalysed reaction is (E)-coniferol + NADP(+) = (E)-coniferaldehyde + NADPH + H(+). It carries out the reaction (E)-sinapyl alcohol + NADP(+) = (E)-sinapaldehyde + NADPH + H(+). It catalyses the reaction (E)-4-coumaroyl alcohol + NADP(+) = (E)-4-coumaraldehyde + NADPH + H(+). The enzyme catalyses (E)-caffeyl alcohol + NADP(+) = (E)-caffeyl aldehyde + NADPH + H(+). It participates in aromatic compound metabolism; phenylpropanoid biosynthesis. Involved in lignin biosynthesis. Catalyzes the final step specific for the production of lignin monomers. Catalyzes the NADPH-dependent reduction of coniferaldehyde, 5-hydroxyconiferaldehyde, sinapaldehyde, 4-coumaraldehyde and caffeyl aldehyde to their respective alcohols. The sequence is that of Probable cinnamyl alcohol dehydrogenase 1 (CAD1) from Aralia cordata (Udo).